The following is a 324-amino-acid chain: Galactosylgalactosylxylosylprotein 3-beta-glucuronosyltransferase 2 (324 aa).

The Cytoplasmic segment spans residues 1 to 2 (MK). A helical; Signal-anchor for type II membrane protein transmembrane segment spans residues 3–23 (SALCNRFFILLPWILIVIIML). Over 24-324 (DVDPRRPAPQ…YHMDTVNIEV (301 aa)) the chain is Lumenal. Residues 34–78 (LTSRPYFSPHTVGCGGSRVPLRRSSPGRDAAEKRNESRPQLQPEP) are disordered. A glycan (N-linked (GlcNAc...) asparagine) is linked at asparagine 68. Aspartate 188 contacts Mn(2+). Glutamate 274 (proton acceptor) is an active-site residue. An N-linked (GlcNAc...) asparagine glycan is attached at asparagine 293.

This sequence belongs to the glycosyltransferase 43 family. Homodimer. The cofactor is Mn(2+). As to expression, expressed in the cerebral cortex, cerebellum and whole brain.

It localises to the golgi apparatus membrane. It catalyses the reaction 3-O-(beta-D-galactosyl-(1-&gt;3)-beta-D-galactosyl-(1-&gt;4)-beta-D-xylosyl)-L-seryl-[protein] + UDP-alpha-D-glucuronate = 3-O-(beta-D-GlcA-(1-&gt;3)-beta-D-Gal-(1-&gt;3)-beta-D-Gal-(1-&gt;4)-beta-D-Xyl)-L-seryl-[protein] + UDP + H(+). The protein operates within protein modification; protein glycosylation. Functionally, involved in the biosynthesis of L2/HNK-1 carbohydrate epitope on both glycolipids and glycoproteins. Substrates include asialo-orosomucoid (ASOR), paragloboside (lacto-N-neotetraosylceramide), Gal-beta-1,4-GlcNAc-beta-1,3-Gal-beta-1,4-Glc-pyridylamine and Gal-beta-1,3-GlcNAc-beta-1,3-Gal-beta-1,4-Glc-pyridylamine. This Rattus norvegicus (Rat) protein is Galactosylgalactosylxylosylprotein 3-beta-glucuronosyltransferase 2 (B3gat2).